The chain runs to 704 residues: D-(-)-3-hydroxybutyrate oligomer hydrolase (704 aa).

The N-terminal stretch at 1–31 (MTTTNRNNLKLTALTAAVLTLSACGGSDAVA) is a signal peptide. Ser-309 acts as the Charge relay system in catalysis.

Belongs to the D-(-)-3-hydroxybutyrate oligomer hydrolase family.

It localises to the secreted. The catalysed reaction is (3R)-hydroxybutanoate dimer + H2O = 2 (R)-3-hydroxybutanoate + H(+). The protein operates within lipid metabolism; butanoate metabolism. Its function is as follows. Participates in the degradation of poly-3-hydroxybutyrate (PHB). It works downstream of poly(3-hydroxybutyrate) depolymerase, hydrolyzing D(-)-3-hydroxybutyrate oligomers of various length (3HB-oligomers) into 3HB-monomers. In Albidiferax ferrireducens (strain ATCC BAA-621 / DSM 15236 / T118) (Rhodoferax ferrireducens), this protein is D-(-)-3-hydroxybutyrate oligomer hydrolase.